Here is a 307-residue protein sequence, read N- to C-terminus: ATP synthase gamma chain (307 aa).

The protein belongs to the ATPase gamma chain family. F-type ATPases have 2 components, CF(1) - the catalytic core - and CF(0) - the membrane proton channel. CF(1) has five subunits: alpha(3), beta(3), gamma(1), delta(1), epsilon(1). CF(0) has three main subunits: a, b and c.

The protein resides in the cell membrane. Functionally, produces ATP from ADP in the presence of a proton gradient across the membrane. The gamma chain is believed to be important in regulating ATPase activity and the flow of protons through the CF(0) complex. This is ATP synthase gamma chain from Mycolicibacterium smegmatis (strain ATCC 700084 / mc(2)155) (Mycobacterium smegmatis).